Consider the following 1114-residue polypeptide: Extracellular sulfatase SULF-1 homolog (1114 aa).

An N-terminal signal peptide occupies residues 1 to 25 (MMRHSSLRLIIGGLILLLFVLNVFS). Ca(2+)-binding residues include Asp-62, Asp-63, and Cys-98. Cys-98 serves as the catalytic Nucleophile. The residue at position 98 (Cys-98) is a 3-oxoalanine (Cys). N-linked (GlcNAc...) asparagine glycans are attached at residues Asn-122, Asn-159, Asn-181, Asn-208, and Asn-251. The Ca(2+) site is built by Asp-327 and His-328. Asn-447 carries an N-linked (GlcNAc...) asparagine glycan. Residues 466–479 (SSSSTAATLMSSTA) show a composition bias toward low complexity. A disordered region spans residues 466–504 (SSSSTAATLMSSTAQQPEDGEEEVETDNEEDDVDGDGAM). The segment covering 483–502 (EDGEEEVETDNEEDDVDGDG) has biased composition (acidic residues). 3 N-linked (GlcNAc...) asparagine glycosylation sites follow: Asn-683, Asn-713, and Asn-743. The tract at residues 781–812 (KQLRESNKQALAAGRRNDNRRRNDQSVLDSGA) is disordered. The span at 795 to 804 (RRNDNRRRND) shows a compositional bias: basic and acidic residues. N-linked (GlcNAc...) asparagine glycosylation occurs at Asn-817. Positions 876–895 (ADSKEMAREARRKLKEERQR) are enriched in basic and acidic residues. The segment at 876–901 (ADSKEMAREARRKLKEERQRKKERKR) is disordered. N-linked (GlcNAc...) asparagine glycosylation is found at Asn-945, Asn-955, and Asn-974. A disordered region spans residues 1073-1114 (LSKYNRLTGSQQSHMKRRPWKQTPLQQSPRFLRTHSVTPAQA). A compositionally biased stretch (polar residues) spans 1095–1114 (TPLQQSPRFLRTHSVTPAQA).

This sequence belongs to the sulfatase family. Ca(2+) is required as a cofactor. In terms of processing, the conversion to 3-oxoalanine (also known as C-formylglycine, FGly), of a serine or cysteine residue in prokaryotes and of a cysteine residue in eukaryotes, is critical for catalytic activity.

It is found in the endoplasmic reticulum. The protein localises to the golgi apparatus. Its subcellular location is the golgi stack. The protein resides in the cell surface. The polypeptide is Extracellular sulfatase SULF-1 homolog (Sulf1) (Drosophila melanogaster (Fruit fly)).